The chain runs to 433 residues: V-type ATP synthase beta chain (433 aa).

It belongs to the ATPase alpha/beta chains family.

In terms of biological role, produces ATP from ADP in the presence of a proton gradient across the membrane. The V-type beta chain is a regulatory subunit. The chain is V-type ATP synthase beta chain from Borrelia turicatae (strain 91E135).